Here is a 391-residue protein sequence, read N- to C-terminus: Oxytocin receptor (391 aa).

The Extracellular segment spans residues 1–38 (MEGAFAANWSAEAVNGSAAPPGTEGNRTAGPPQRNEAL). Residues asparagine 8, asparagine 15, and asparagine 26 are each glycosylated (N-linked (GlcNAc...) asparagine). Residues 39 to 63 (ARVEVAVLSLILFLALSGNACVLLA) form a helical membrane-spanning segment. At 64 to 74 (LRTTRHKHSRL) the chain is on the cytoplasmic side. A helical transmembrane segment spans residues 75–97 (FFFMKHLSIADLAVAVFQVLPQL). The Extracellular portion of the chain corresponds to 98–113 (LWDITFRFYGPDLLCR). The cysteines at positions 112 and 187 are disulfide-linked. The helical transmembrane segment at 114 to 135 (LVKYLQVVGMFASTYLLLLMSL) threads the bilayer. Residues 136–154 (DRCLAICQPLRSLRRRTDR) lie on the Cytoplasmic side of the membrane. Residues 155 to 175 (LAVLATWLGCLVASAPQVHIF) form a helical membrane-spanning segment. Topologically, residues 176–202 (SLREVADGVFDCWAVFIQPWGPKAYIT) are extracellular. Residues 203–225 (WITLAVYIVPVIVLAACYGLISF) traverse the membrane as a helical segment. The Cytoplasmic segment spans residues 226 to 277 (KIWQNLRLKTEAAAAEASAGAEGAAADCAGRAALARVSNVKLISKAKIRTVK). Residues 278 to 296 (MTFIVVLAFIVCWTPFFFK) form a helical membrane-spanning segment. The Extracellular segment spans residues 297-311 (QMWSVWDADAPKEAS). Residues 312 to 334 (AFIIAMLLASLNSCCNPWIYMLF) traverse the membrane as a helical segment. At 335-391 (TGHLFQDLVQRFLCCSFRRLKGSQLGETSVTKKIHSYTFVLSRHSSSQRSCSQPSTV) the chain is on the cytoplasmic side. A Phosphoserine modification is found at serine 370.

The protein belongs to the G-protein coupled receptor 1 family. Vasopressin/oxytocin receptor subfamily.

Its subcellular location is the cell membrane. Functionally, receptor for oxytocin. The activity of this receptor is mediated by G proteins which activate a phosphatidylinositol-calcium second messenger system. In Ovis aries (Sheep), this protein is Oxytocin receptor (OXTR).